A 191-amino-acid polypeptide reads, in one-letter code: UPF0228 protein MM_1428 (191 aa).

This sequence belongs to the UPF0228 family.

The chain is UPF0228 protein MM_1428 from Methanosarcina mazei (strain ATCC BAA-159 / DSM 3647 / Goe1 / Go1 / JCM 11833 / OCM 88) (Methanosarcina frisia).